The primary structure comprises 136 residues: ATP synthase epsilon chain (136 aa).

It belongs to the ATPase epsilon chain family. As to quaternary structure, F-type ATPases have 2 components, CF(1) - the catalytic core - and CF(0) - the membrane proton channel. CF(1) has five subunits: alpha(3), beta(3), gamma(1), delta(1), epsilon(1). CF(0) has three main subunits: a, b and c.

The protein localises to the cell membrane. In terms of biological role, produces ATP from ADP in the presence of a proton gradient across the membrane. This is ATP synthase epsilon chain from Ureaplasma urealyticum serovar 10 (strain ATCC 33699 / Western).